A 200-amino-acid chain; its full sequence is GTP cyclohydrolase-2 (200 aa).

50–54 is a GTP binding site; it reads RIHSE. Zn(2+) is bound by residues C55, C66, and C68. Residues Q71, 93-95, and T115 each bind GTP; that span reads EGR. D127 serves as the catalytic Proton acceptor. The active-site Nucleophile is the R129. T150 and K155 together coordinate GTP.

This sequence belongs to the GTP cyclohydrolase II family. Zn(2+) serves as cofactor.

It catalyses the reaction GTP + 4 H2O = 2,5-diamino-6-hydroxy-4-(5-phosphoribosylamino)-pyrimidine + formate + 2 phosphate + 3 H(+). It functions in the pathway cofactor biosynthesis; riboflavin biosynthesis; 5-amino-6-(D-ribitylamino)uracil from GTP: step 1/4. Catalyzes the conversion of GTP to 2,5-diamino-6-ribosylamino-4(3H)-pyrimidinone 5'-phosphate (DARP), formate and pyrophosphate. The protein is GTP cyclohydrolase-2 of Acinetobacter baylyi (strain ATCC 33305 / BD413 / ADP1).